Consider the following 89-residue polypeptide: Small ribosomal subunit protein uS15 (89 aa).

The protein belongs to the universal ribosomal protein uS15 family. In terms of assembly, part of the 30S ribosomal subunit. Forms a bridge to the 50S subunit in the 70S ribosome, contacting the 23S rRNA.

In terms of biological role, one of the primary rRNA binding proteins, it binds directly to 16S rRNA where it helps nucleate assembly of the platform of the 30S subunit by binding and bridging several RNA helices of the 16S rRNA. Forms an intersubunit bridge (bridge B4) with the 23S rRNA of the 50S subunit in the ribosome. This is Small ribosomal subunit protein uS15 from Orientia tsutsugamushi (strain Boryong) (Rickettsia tsutsugamushi).